Consider the following 40-residue polypeptide: Photosystem II reaction center protein J (40 aa).

A helical transmembrane segment spans residues 8–28 (IPLWIIGTVTGILVIGLVGIF).

It belongs to the PsbJ family. In terms of assembly, PSII is composed of 1 copy each of membrane proteins PsbA, PsbB, PsbC, PsbD, PsbE, PsbF, PsbH, PsbI, PsbJ, PsbK, PsbL, PsbM, PsbT, PsbX, PsbY, PsbZ, Psb30/Ycf12, at least 3 peripheral proteins of the oxygen-evolving complex and a large number of cofactors. It forms dimeric complexes.

The protein resides in the plastid. It is found in the chloroplast thylakoid membrane. Functionally, one of the components of the core complex of photosystem II (PSII). PSII is a light-driven water:plastoquinone oxidoreductase that uses light energy to abstract electrons from H(2)O, generating O(2) and a proton gradient subsequently used for ATP formation. It consists of a core antenna complex that captures photons, and an electron transfer chain that converts photonic excitation into a charge separation. In Jasminum nudiflorum (Winter jasmine), this protein is Photosystem II reaction center protein J.